A 298-amino-acid chain; its full sequence is UDP-3-O-acyl-N-acetylglucosamine deacetylase (298 aa).

Zn(2+) is bound by residues His79, His239, and Asp243. His266 acts as the Proton donor in catalysis.

It belongs to the LpxC family. Zn(2+) serves as cofactor.

The catalysed reaction is a UDP-3-O-[(3R)-3-hydroxyacyl]-N-acetyl-alpha-D-glucosamine + H2O = a UDP-3-O-[(3R)-3-hydroxyacyl]-alpha-D-glucosamine + acetate. It participates in glycolipid biosynthesis; lipid IV(A) biosynthesis; lipid IV(A) from (3R)-3-hydroxytetradecanoyl-[acyl-carrier-protein] and UDP-N-acetyl-alpha-D-glucosamine: step 2/6. Catalyzes the hydrolysis of UDP-3-O-myristoyl-N-acetylglucosamine to form UDP-3-O-myristoylglucosamine and acetate, the committed step in lipid A biosynthesis. The chain is UDP-3-O-acyl-N-acetylglucosamine deacetylase from Wigglesworthia glossinidia brevipalpis.